Here is a 400-residue protein sequence, read N- to C-terminus: WW domain-containing transcription regulator protein 1 (400 aa).

A Glycyl lysine isopeptide (Lys-Gly) (interchain with G-Cter in ubiquitin) cross-link involves residue Lys-46. The segment at 52-117 (FFKEPDSGSH…QQHAHLRQQS (66 aa)) is disordered. The segment covering 61–70 (HSRQSSTDSS) has biased composition (polar residues). 2 positions are modified to phosphoserine: Ser-62 and Ser-89. Low complexity predominate over residues 91–110 (PASLQLGPGAGAAGSPAQQH). Positions 124–157 (LPLPPGWEMTFTATGQRYFLNHIEKITTWQDPRK) constitute a WW domain. Over residues 192 to 211 (NHQHQQQMAPTNLSQQNHPT) the composition is skewed to polar residues. The disordered stretch occupies residues 192 to 216 (NHQHQQQMAPTNLSQQNHPTQNPPA). Residues 222 to 400 (PNALTTQQQQ…NKSEPFLTWL (179 aa)) are required for interaction with PALS1. Phosphoserine occurs at positions 295 and 311. The short motif at 394-400 (EPFLTWL) is the PDZ-binding element.

As to quaternary structure, binds to SLC9A3R2 via the PDZ motif at the plasma membrane. Binds to YWHAZ in vivo and in vitro through the phosphoserine-binding motif RSHSSP. Interacts (via coiled-coil domain) with SMAD2 (via MH1 domain), SMAD3 and SMAD4. Interacts with MED15. Interacts with PAX8 and NKX2-1. Interacts with TEAD1, TEAD2, TEAD3 and TEAD4. Interacts (via WW domain) with PALS1. Interacts with LATS1. Interacts with YAP1 (when phosphorylated at 'Ser-112'). Interacts (via WW domain) with PRRG4 (via cytoplasmic domain). Interacts (via WW domain) with AMOTL2 (via PPXY motif); the interaction promotes WWTR1/TAZ localization to the cytoplasm and tight junctions, thereby inhibiting its transcriptional coactivator properties. Interacts (via WW domain) with AMOT; the interaction facilitates translocation of WWTR1/TAZ to the cytoplasm. Phosphorylated by LATS2 and STK3/MST2. Phosphorylation by LATS2 results in creation of 14-3-3 binding sites, retention in the cytoplasm, and functional inactivation. Phosphorylation results in the inhibition of transcriptional coactivation through YWHAZ-mediated nuclear export. Post-translationally, ubiquitinated at Lys-46; leading to proteasomal degradation. Deubiquitinated and stabilized by UCHL1 at Lys-46; leading to inhibition of osteoclastogenesis.

The protein resides in the cytoplasm. Its subcellular location is the nucleus. It is found in the cell membrane. The protein localises to the cell junction. It localises to the tight junction. Its function is as follows. Transcriptional coactivator which acts as a downstream regulatory target in the Hippo signaling pathway that plays a pivotal role in organ size control and tumor suppression by restricting proliferation and promoting apoptosis. The core of this pathway is composed of a kinase cascade wherein STK3/MST2 and STK4/MST1, in complex with its regulatory protein SAV1, phosphorylates and activates LATS1/2 in complex with its regulatory protein MOB1, which in turn phosphorylates and inactivates YAP1 oncoprotein and WWTR1/TAZ. WWTR1 enhances PAX8 and NKX2-1/TTF1-dependent gene activation. In conjunction with YAP1, involved in the regulation of TGFB1-dependent SMAD2 and SMAD3 nuclear accumulation. Plays a key role in coupling SMADs to the transcriptional machinery such as the mediator complex. Regulates embryonic stem-cell self-renewal, promotes cell proliferation and epithelial-mesenchymal transition. The protein is WW domain-containing transcription regulator protein 1 of Canis lupus familiaris (Dog).